We begin with the raw amino-acid sequence, 1463 residues long: Secretory phospholipase A2 receptor (1463 aa).

Positions 1–20 are cleaved as a signal peptide; that stretch reads MLLSPSLLLLLLLGAPRGCA. The Extracellular portion of the chain corresponds to 21-1397; the sequence is EGVAAALTPE…ALPEKGPSHS (1377 aa). A Ricin B-type lectin domain is found at 38–161; that stretch reads KGIFVIQSES…GSGGGDICEY (124 aa). 14 disulfide bridges follow: C51–C64, C89–C106, C178–C204, C192–C219, C260–C354, C330–C346, C406–C501, C478–C493, C617–C634, C699–C796, C774–C788, C840–C937, C914–C929, and C1067–C1087. Residue N93 is glycosylated (N-linked (GlcNAc...) asparagine). The region spanning 173–221 is the Fibronectin type-II domain; sequence THGMPCMFPFQYNHQWHHECTREGREDDLLWCATTSRYERDEKWGFCPD. 8 C-type lectin domains span residues 238–355, 385–502, 522–643, 673–797, 819–938, 965–1096, 1121–1232, and 1257–1378; these read NSHI…YICK, YNRN…YICK, HGGF…MSLC, GLAS…WICK, YQDA…SICK, FNYK…GFVC, YGNR…GAIC, and FKSN…FICK. N454 carries N-linked (GlcNAc...) asparagine glycosylation. N-linked (GlcNAc...) asparagine glycosylation is present at N1123. Disulfide bonds link C1209-C1223, C1280-C1377, and C1354-C1369. Residues 1398-1418 traverse the membrane as a helical segment; sequence IIPLAVVLTLIVIVAICTLSF. The Cytoplasmic segment spans residues 1419–1463; the sequence is CIYKHNGGFFRRLAGFRNPYYPATNFSTVYLEENILISDLEKSDQ. The Endocytosis signal signature appears at 1436-1442; sequence NPYYPAT.

In terms of assembly, interacts with sPLA2-IB/PLA2G1B; this interaction mediates intracellular signaling as well as clearance of extracellular sPLA2-IB/PLA2G1B via endocytotic pathway. Interacts with sPLA2-X/PLA2G10; this interaction mediates sPLA2-X/PLA2G10 clearance and inactivation. In terms of processing, the secretory phospholipase A2 receptor form may be produced by the action of metalloproteinases. It contains all extracellular domains and only lacks transmembrane and cytosolic regions. It is however unclear whether this form is produced by proteolytic cleavage as suggested by some experiments, or by alternative splicing, as in the case of isoform 2 that shares all characteristics of secretory phospholipase A2 receptor form. Expressed in podocytes (at protein level). Present in lung macrophage (at protein level). Highly expressed in kidney. Also expressed in pancreas, amnion, choriodecidua and placenta. Isoform 2 is expressed at much lower level.

It localises to the cell membrane. The protein localises to the secreted. Its function is as follows. Receptor for secretory phospholipase A2 (sPLA2). Acts as a receptor for phospholipase sPLA2-IB/PLA2G1B but not sPLA2-IIA/PLA2G2A. Also able to bind to snake PA2-like toxins. Although its precise function remains unclear, binding of sPLA2 to its receptor participates in both positive and negative regulation of sPLA2 functions as well as clearance of sPLA2. Binding of sPLA2-IB/PLA2G1B induces various effects depending on the cell type, such as activation of the mitogen-activated protein kinase (MAPK) cascade to induce cell proliferation, the production of lipid mediators, selective release of arachidonic acid in bone marrow-derived mast cells. In neutrophils, binding of sPLA2-IB/PLA2G1B can activate p38 MAPK to stimulate elastase release and cell adhesion. May be involved in responses in pro-inflammatory cytokine productions during endotoxic shock. Also has endocytic properties and rapidly internalizes sPLA2 ligands, which is particularly important for the clearance of extracellular sPLA2s to protect their potent enzymatic activities. The soluble secretory phospholipase A2 receptor form is circulating and acts as a negative regulator of sPLA2 functions by blocking the biological functions of sPLA2-IB/PLA2G1B. In podocytes, binding of sPLA2-IB/PLA2G1B can regulate podocyte survival and glomerular homeostasis. The sequence is that of Secretory phospholipase A2 receptor (PLA2R1) from Homo sapiens (Human).